Here is a 130-residue protein sequence, read N- to C-terminus: Small ribosomal subunit protein uS11c (130 aa).

The protein belongs to the universal ribosomal protein uS11 family. In terms of assembly, part of the 30S ribosomal subunit.

It is found in the plastid. It localises to the chloroplast. The protein is Small ribosomal subunit protein uS11c of Angiopteris evecta (Mule's foot fern).